A 489-amino-acid chain; its full sequence is Dihydropyrimidinase 1 (489 aa).

Residues His-61, His-63, and Lys-156 each contribute to the Zn(2+) site. Lys-156 bears the N6-carboxylysine mark. Tyr-161 lines the substrate pocket. Residues His-189 and His-245 each coordinate Zn(2+). Ser-295 lines the substrate pocket. Zn(2+) is bound at residue Asp-323. Residue Asn-344 participates in substrate binding.

Belongs to the metallo-dependent hydrolases superfamily. Hydantoinase/dihydropyrimidinase family. As to quaternary structure, homotetramer. Requires Zn(2+) as cofactor. In terms of processing, carboxylation allows a single lysine to coordinate two zinc ions. In terms of tissue distribution, in L1-L2 larvae, expressed in body hypodermal cells, hemidesmosomes and in a neuronal cell between the pharynx and ring neuropil. In adults, expression is seen in body hypodermal cells and pharynx.

It localises to the nucleus. It catalyses the reaction 5,6-dihydrouracil + H2O = 3-(carbamoylamino)propanoate + H(+). The polypeptide is Dihydropyrimidinase 1 (dhp-1) (Caenorhabditis elegans).